We begin with the raw amino-acid sequence, 86 residues long: RNA-binding protein Hfq (86 aa).

A Sm domain is found at aspartate 12–valine 73.

It belongs to the Hfq family. As to quaternary structure, homohexamer.

In terms of biological role, RNA chaperone that binds small regulatory RNA (sRNAs) and mRNAs to facilitate mRNA translational regulation in response to envelope stress, environmental stress and changes in metabolite concentrations. Also binds with high specificity to tRNAs. The protein is RNA-binding protein Hfq of Thermoanaerobacter pseudethanolicus (strain ATCC 33223 / 39E) (Clostridium thermohydrosulfuricum).